We begin with the raw amino-acid sequence, 170 residues long: ATP synthase subunit b (170 aa).

Residues 11-31 traverse the membrane as a helical segment; the sequence is AFTFGDAFFTLFAFAILLVLI.

It belongs to the ATPase B chain family. F-type ATPases have 2 components, F(1) - the catalytic core - and F(0) - the membrane proton channel. F(1) has five subunits: alpha(3), beta(3), gamma(1), delta(1), epsilon(1). F(0) has three main subunits: a(1), b(2) and c(10-14). The alpha and beta chains form an alternating ring which encloses part of the gamma chain. F(1) is attached to F(0) by a central stalk formed by the gamma and epsilon chains, while a peripheral stalk is formed by the delta and b chains.

It localises to the cell membrane. F(1)F(0) ATP synthase produces ATP from ADP in the presence of a proton or sodium gradient. F-type ATPases consist of two structural domains, F(1) containing the extramembraneous catalytic core and F(0) containing the membrane proton channel, linked together by a central stalk and a peripheral stalk. During catalysis, ATP synthesis in the catalytic domain of F(1) is coupled via a rotary mechanism of the central stalk subunits to proton translocation. Its function is as follows. Component of the F(0) channel, it forms part of the peripheral stalk, linking F(1) to F(0). The chain is ATP synthase subunit b from Listeria innocua serovar 6a (strain ATCC BAA-680 / CLIP 11262).